A 257-amino-acid polypeptide reads, in one-letter code: 5'-nucleotidase SurE (257 aa).

A divalent metal cation-binding residues include aspartate 8, aspartate 9, serine 40, and asparagine 93.

This sequence belongs to the SurE nucleotidase family. The cofactor is a divalent metal cation.

It localises to the cytoplasm. The catalysed reaction is a ribonucleoside 5'-phosphate + H2O = a ribonucleoside + phosphate. Its function is as follows. Nucleotidase that shows phosphatase activity on nucleoside 5'-monophosphates. This chain is 5'-nucleotidase SurE, found in Phenylobacterium zucineum (strain HLK1).